The sequence spans 1296 residues: MPFVNKQFNYKDPVNGVDIAYIKIPNAGQMQPVKAFKIHNKIWVIPERDTFTNPEEGDLNPPPEAKQVPVSYYDSTYLSTDNEKDNYLKGVTKLFERIYSTDLGRMLLTSIVRGIPFWGGSTIDTELKVIDTNCINVIQPDGSYRSEELNLVIIGPSADIIQFECKSFGHEVLNLTRNGYGSTQYIRFSPDFTFGFEESLEVDTNPLLGAGKFATDPAVTLAHELIHAGHRLYGIAINPNRVFKVNTNAYYEMSGLEVSFEELRTFGGHDAKFIDSLQENEFRLYYYNKFKDIASTLNKAKSIVGTTASLQYMKNVFKEKYLLSEDTSGKFSVDKLKFDKLYKMLTEIYTEDNFVKFFKVLNRKTYLNFDKAVFKINIVPKVNYTIYDGFNLRNTNLAANFNGQNTEINNMNFTKLKNFTGLFEFYKLLCVRGIITSKTKSLDKGYNKALNDLCIKVNNWDLFFSPSEDNFTNDLNKGEEITSDTNIEAAEENISLDLIQQYYLTFNFDNEPENISIENLSSDIIGQLELMPNIERFPNGKKYELDKYTMFHYLRAQEFEHGKSRIALTNSVNEALLNPSRVYTFFSSDYVKKVNKATEAAMFLGWVEQLVYDFTDETSEVSTTDKIADITIIIPYIGPALNIGNMLYKDDFVGALIFSGAVILLEFIPEIAIPVLGTFALVSYIANKVLTVQTIDNALSKRNEKWDEVYKYIVTNWLAKVNTQIDLIRKKMKEALENQAEATKAIINYQYNQYTEEEKNNINFNIDDLSSKLNESINKAMININKFLNQCSVSYLMNSMIPYGVKRLEDFDASLKDALLKYIYDNRGTLIGQVDRLKDKVNNTLSTDIPFQLSKYVDNQRLLSTFTEYIKNIINTSILNLRYESNHLIDLSRYASKINIGSKVNFDPIDKNQIQLFNLESSKIEVILKNAIVYNSMYENFSTSFWIRIPKYFNSISLNNEYTIINCMENNSGWKVSLNYGEIIWTLQDTQEIKQRVVFKYSQMINISDYINRWIFVTITNNRLNNSKIYINGRLIDQKPISNLGNIHASNNIMFKLDGCRDTHRYIWIKYFNLFDKELNEKEIKDLYDNQSNSGILKDFWGDYLQYDKPYYMLNLYDPNKYVDVNNVGIRGYMYLKGPRGSVMTTNIYLNSSLYRGTKFIIKKYASGNKDNIVRNNDRVYINVVVKNKEYRLATNASQAGVEKILSALEIPDVGNLSQVVVMKSKNDQGITNKCKMNLQDNNGNDIGFIGFHQFNNIAKLVASNWYNRQIERSSRTLGCSWEFIPVDDGWGERPL.

His223 contributes to the Zn(2+) binding site. Glu224 is an active-site residue. The Zn(2+) site is built by His227 and Glu262. Residues Cys430 and Cys454 are joined by a disulfide bond. The tract at residues 449–872 (ALNDLCIKVN…LSTFTEYIKN (424 aa)) is translocation domain (TD). Residues 492–545 (ENISLDLIQQYYLTFNFDNEPENISIENLSSDIIGQLELMPNIERFPNGKKYEL) are belt. Helical transmembrane passes span 627-647 (IADI…GNML) and 656-676 (LIFS…IPVL). Residues 873–1092 (IINTSILNLR…EIKDLYDNQS (220 aa)) form an N-terminus of receptor binding domain (N-RBD) region. The interval 1093-1296 (NSGILKDFWG…VDDGWGERPL (204 aa)) is C-terminus of receptor binding domain (C-RBD). A disulfide bridge connects residues Cys1235 and Cys1280. Residues 1264 to 1267 (SNWY) carry the Host ganglioside-binding motif motif.

The protein belongs to the peptidase M27 family. In terms of assembly, heterodimer; disulfide-linked heterodimer of a light chain (LC) and a heavy chain (HC). Interacts with host synaptic vesicle glycoproteins SV2A, SV2B and SV2C which serve as coreceptors. Glycosylation of 'Asn-559' in SV2C probably contributes a 12-fold increase in affinity to this interaction. Depolarization of target tissue with high levels of K(+) leads to greater levels of receptor exposure. Requires Zn(2+) as cofactor. Post-translationally, in a bacterial culture the precursor chain is initally cleaved on the amino side of Gly-445 and is processed more slowly between Lys-448 and Ala-449 to give the final mature heavy chain sequence.

Its subcellular location is the secreted. It is found in the host cytoplasm. It localises to the host cytosol. The protein resides in the host synapse. The protein localises to the host presynaptic cell membrane. Its subcellular location is the host cytoplasmic vesicle. It is found in the host secretory vesicle. It localises to the host synaptic vesicle membrane. It catalyses the reaction Limited hydrolysis of proteins of the neuroexocytosis apparatus, synaptobrevins, SNAP25 or syntaxin. No detected action on small molecule substrates.. Its activity is regulated as follows. SNAP25 proteolysis is inhibited by 1,10-phenanthroline and 2,2'-dipyridyl but not EDTA. Inhibited by hydroxamate compounds with halogenated benzene-containing arms which directly bind the zinc ion. Botulinum toxin causes flaccid paralysis by inhibiting neurotransmitter (acetylcholine) release from the presynaptic membranes of nerve terminals of the eukaryotic host skeletal and autonomic nervous system, with frequent heart or respiratory failure. Precursor of botulinum neurotoxin A which has 2 coreceptors; complex polysialylated gangliosides found on neural tissue and specific membrane-anchored proteins of synaptic vesicles. Receptor proteins are exposed on host presynaptic cell membrane during neurotransmitter release, when the toxin heavy chain (HC) binds to them. Upon synaptic vesicle recycling the toxin is taken up via the endocytic pathway. When the pH of the toxin-containing endosome drops a structural rearrangement occurs so that the N-terminus of the HC forms pores that allows the light chain (LC) to translocate into the cytosol. Once in the cytosol the disulfide bond linking the 2 subunits is reduced and LC cleaves its target protein on synaptic vesicles, preventing their fusion with the cytoplasmic membrane and thus neurotransmitter release. Functionally, has proteolytic activity. In vitro the whole toxin is reduced to release LC. After translocation into the eukaryotic host cytosol, LC hydrolyzes the 197-Gln-|-Arg-198 bond in SNAP25, blocking neurotransmitter release. Its function is as follows. Responsible for host epithelial cell transcytosis, host nerve cell targeting and translocation of light chain (LC) into host cytosol. Composed of 3 subdomains; the translocation domain (TD), and N-terminus and C-terminus of the receptor-binding domain (RBD). The RBD is responsible for the adherence of the toxin to the cell surface. It simultaneously recognizes 2 coreceptors; polysialated gangliosides and synaptic vesicle glycoproteins SV2A, SV2B and SV2C in close proximity on host synaptic vesicles. The RBD specifically recognizes the N-linked glycan on 'Asn-559' of SV2A, SV2B and SV2C. Isolated HC binds to host synaptosomes, significantly decreases uptake and toxicity of whole BoNT/A. Binds ganglioside GD1a in vitro. The N-terminus of the TD wraps an extended belt around the perimeter of the LC, protecting Zn(2+) in the active site; it may also prevent premature LC dissociation from the translocation channel and to protect toxin prior to translocation. The TD inserts into synaptic vesicle membrane to allow translocation into the host cytosol. In Clostridium botulinum (strain Hall / ATCC 3502 / NCTC 13319 / Type A), this protein is Botulinum neurotoxin type A.